The chain runs to 233 residues: tRNA (guanine-N(1)-)-methyltransferase (233 aa).

Residues G113 and 133-138 (VGDYVL) each bind S-adenosyl-L-methionine.

This sequence belongs to the RNA methyltransferase TrmD family. In terms of assembly, homodimer.

Its subcellular location is the cytoplasm. It carries out the reaction guanosine(37) in tRNA + S-adenosyl-L-methionine = N(1)-methylguanosine(37) in tRNA + S-adenosyl-L-homocysteine + H(+). Functionally, specifically methylates guanosine-37 in various tRNAs. In Rhizobium etli (strain ATCC 51251 / DSM 11541 / JCM 21823 / NBRC 15573 / CFN 42), this protein is tRNA (guanine-N(1)-)-methyltransferase.